Reading from the N-terminus, the 583-residue chain is Aspartate--tRNA ligase (583 aa).

Glutamate 174 provides a ligand contact to L-aspartate. The aspartate stretch occupies residues 198–201 (QITK). L-aspartate is bound at residue arginine 220. ATP contacts are provided by residues 220–222 (RDE) and glutamine 229. L-aspartate is bound at residue histidine 443. Glutamate 477 lines the ATP pocket. Arginine 484 contributes to the L-aspartate binding site. 529 to 532 (GLDR) contacts ATP.

It belongs to the class-II aminoacyl-tRNA synthetase family. Type 1 subfamily. As to quaternary structure, homodimer.

Its subcellular location is the cytoplasm. It carries out the reaction tRNA(Asp) + L-aspartate + ATP = L-aspartyl-tRNA(Asp) + AMP + diphosphate. Functionally, catalyzes the attachment of L-aspartate to tRNA(Asp) in a two-step reaction: L-aspartate is first activated by ATP to form Asp-AMP and then transferred to the acceptor end of tRNA(Asp). The sequence is that of Aspartate--tRNA ligase from Streptococcus thermophilus (strain ATCC BAA-491 / LMD-9).